We begin with the raw amino-acid sequence, 357 residues long: Glycerol-3-phosphate dehydrogenase [NAD(P)+] (357 aa).

4 residues coordinate NADPH: Ser-12, Trp-13, His-33, and Lys-115. Sn-glycerol 3-phosphate contacts are provided by Lys-115, Gly-149, and Ser-151. Gly-153 provides a ligand contact to NADPH. 4 residues coordinate sn-glycerol 3-phosphate: Lys-204, Asp-263, Arg-274, and Asn-275. The active-site Proton acceptor is the Lys-204. NADPH is bound at residue Arg-274. 2 residues coordinate NADPH: Leu-307 and Glu-309.

It belongs to the NAD-dependent glycerol-3-phosphate dehydrogenase family.

Its subcellular location is the cytoplasm. The catalysed reaction is sn-glycerol 3-phosphate + NAD(+) = dihydroxyacetone phosphate + NADH + H(+). The enzyme catalyses sn-glycerol 3-phosphate + NADP(+) = dihydroxyacetone phosphate + NADPH + H(+). It functions in the pathway membrane lipid metabolism; glycerophospholipid metabolism. Its function is as follows. Catalyzes the reduction of the glycolytic intermediate dihydroxyacetone phosphate (DHAP) to sn-glycerol 3-phosphate (G3P), the key precursor for phospholipid synthesis. The sequence is that of Glycerol-3-phosphate dehydrogenase [NAD(P)+] from Treponema denticola (strain ATCC 35405 / DSM 14222 / CIP 103919 / JCM 8153 / KCTC 15104).